We begin with the raw amino-acid sequence, 194 residues long: Probable calcium-binding protein CML45 (194 aa).

Over residues 52–63 (NNKDQQETLTKQ) the composition is skewed to basic and acidic residues. The tract at residues 52-81 (NNKDQQETLTKQEDDDDDDDDDDDDDDDDI) is disordered. The span at 64-81 (EDDDDDDDDDDDDDDDDI) shows a compositional bias: acidic residues. EF-hand domains are found at residues 76–98 (DDDD…LGLF), 122–157 (ASLE…LGFK), and 160–194 (SYLD…TSFY). Ca(2+)-binding residues include aspartate 135, asparagine 137, aspartate 139, glutamate 146, aspartate 173, asparagine 175, aspartate 177, lysine 179, and glutamate 184.

In terms of biological role, potential calcium sensor. In Arabidopsis thaliana (Mouse-ear cress), this protein is Probable calcium-binding protein CML45.